We begin with the raw amino-acid sequence, 146 residues long: UPF0260 protein Ssed_2516 (146 aa).

This sequence belongs to the UPF0260 family.

The sequence is that of UPF0260 protein Ssed_2516 from Shewanella sediminis (strain HAW-EB3).